A 301-amino-acid polypeptide reads, in one-letter code: Cuticle collagen 2 (301 aa).

A signal peptide spans Met-1–Asn-37. Triple-helical region stretches follow at residues Gly-105–Gly-134, Gly-153–Pro-176, Gly-183–Ser-212, and Gly-215–Cys-282. The disordered stretch occupies residues Pro-109–Lys-284. Composition is skewed to pro residues over residues Thr-143 to Asp-170 and Pro-179 to Ala-191. A compositionally biased stretch (gly residues) spans Gly-201–Gly-218. The span at Glu-219–Ala-229 shows a compositional bias: pro residues. Over residues Pro-252–Asp-261 the composition is skewed to low complexity. Positions Gly-262–Gly-274 are enriched in gly residues.

The protein belongs to the cuticular collagen family. As to quaternary structure, collagen polypeptide chains are complexed within the cuticle by disulfide bonds and other types of covalent cross-links. In terms of tissue distribution, syncytial dorsal and ventral epidermis.

Nematode cuticles are composed largely of collagen-like proteins. The cuticle functions both as an exoskeleton and as a barrier to protect the worm from its environment. In Caenorhabditis elegans, this protein is Cuticle collagen 2 (col-2).